A 266-amino-acid chain; its full sequence is Phosphate import ATP-binding protein PstB 1 (266 aa).

Residues 18 to 261 (AQTSNLSFYY…PTNQLTEQYV (244 aa)) enclose the ABC transporter domain. 50–57 (GPSGCGKT) is an ATP binding site.

The protein belongs to the ABC transporter superfamily. Phosphate importer (TC 3.A.1.7) family. The complex is composed of two ATP-binding proteins (PstB), two transmembrane proteins (PstC and PstA) and a solute-binding protein (PstS).

Its subcellular location is the cell inner membrane. It carries out the reaction phosphate(out) + ATP + H2O = ADP + 2 phosphate(in) + H(+). Part of the ABC transporter complex PstSACB involved in phosphate import. Responsible for energy coupling to the transport system. This is Phosphate import ATP-binding protein PstB 1 from Gloeobacter violaceus (strain ATCC 29082 / PCC 7421).